The following is a 733-amino-acid chain: Catalase-peroxidase 2 (733 aa).

Residues M1–N35 are disordered. Residues W106–Y234 constitute a cross-link (tryptophyl-tyrosyl-methioninium (Trp-Tyr) (with M-260)). The active-site Proton acceptor is H107. A cross-link (tryptophyl-tyrosyl-methioninium (Tyr-Met) (with W-106)) is located at residues Y234–M260. H275 contacts heme.

It belongs to the peroxidase family. Peroxidase/catalase subfamily. As to quaternary structure, homodimer or homotetramer. It depends on heme b as a cofactor. Post-translationally, formation of the three residue Trp-Tyr-Met cross-link is important for the catalase, but not the peroxidase activity of the enzyme.

The enzyme catalyses H2O2 + AH2 = A + 2 H2O. It carries out the reaction 2 H2O2 = O2 + 2 H2O. Functionally, bifunctional enzyme with both catalase and broad-spectrum peroxidase activity. May play a role in the intracellular survival of mycobacteria. This is Catalase-peroxidase 2 from Mycolicibacterium fortuitum (Mycobacterium fortuitum).